A 136-amino-acid polypeptide reads, in one-letter code: Small ribosomal subunit protein uS9 (136 aa).

The tract at residues 115–136 is disordered; the sequence is KVKERKKPGLRKARKARQFSKR. A compositionally biased stretch (basic residues) spans 117–136; that stretch reads KERKKPGLRKARKARQFSKR.

This sequence belongs to the universal ribosomal protein uS9 family.

The chain is Small ribosomal subunit protein uS9 from Mycoplasmopsis pulmonis (strain UAB CTIP) (Mycoplasma pulmonis).